The chain runs to 494 residues: Ketol-acid reductoisomerase (NADP(+)) (494 aa).

One can recognise a KARI N-terminal Rossmann domain in the interval 14–208; the sequence is LDQLGRCRFM…GGHRAGCLES (195 aa). Residues 45 to 48, Arg68, Arg76, Ser78, and 108 to 110 each bind NADP(+); these read CGAQ and DKQ. The active site involves His132. Gly158 is a binding site for NADP(+). 2 consecutive KARI C-terminal knotted domains span residues 209–344 and 345–487; these read SFVA…NYPA and SDVE…MSDM. Positions 217, 221, 389, and 393 each coordinate Mg(2+). Ser414 contributes to the substrate binding site.

It belongs to the ketol-acid reductoisomerase family. Mg(2+) is required as a cofactor.

The enzyme catalyses (2R)-2,3-dihydroxy-3-methylbutanoate + NADP(+) = (2S)-2-acetolactate + NADPH + H(+). It catalyses the reaction (2R,3R)-2,3-dihydroxy-3-methylpentanoate + NADP(+) = (S)-2-ethyl-2-hydroxy-3-oxobutanoate + NADPH + H(+). The protein operates within amino-acid biosynthesis; L-isoleucine biosynthesis; L-isoleucine from 2-oxobutanoate: step 2/4. Its pathway is amino-acid biosynthesis; L-valine biosynthesis; L-valine from pyruvate: step 2/4. Functionally, involved in the biosynthesis of branched-chain amino acids (BCAA). Catalyzes an alkyl-migration followed by a ketol-acid reduction of (S)-2-acetolactate (S2AL) to yield (R)-2,3-dihydroxy-isovalerate. In the isomerase reaction, S2AL is rearranged via a Mg-dependent methyl migration to produce 3-hydroxy-3-methyl-2-ketobutyrate (HMKB). In the reductase reaction, this 2-ketoacid undergoes a metal-dependent reduction by NADPH to yield (R)-2,3-dihydroxy-isovalerate. The polypeptide is Ketol-acid reductoisomerase (NADP(+)) (Vibrio atlanticus (strain LGP32) (Vibrio splendidus (strain Mel32))).